A 320-amino-acid polypeptide reads, in one-letter code: ATP-dependent 6-phosphofructokinase (320 aa).

Gly12 contacts ATP. Residues 22 to 26 (RGVVR) and 55 to 60 (RYSVSD) contribute to the ADP site. ATP-binding positions include 73–74 (RF) and 103–106 (GDGS). Asp104 serves as a coordination point for Mg(2+). A substrate-binding site is contributed by 126 to 128 (TID). The Proton acceptor role is filled by Asp128. Position 155 (Arg155) interacts with ADP. Substrate is bound by residues Arg163 and 170-172 (MGR). Residues 186–188 (GCE), Lys212, and 214–216 (KKH) each bind ADP. Substrate-binding positions include Glu223, Arg244, and 250-253 (HIQR).

It belongs to the phosphofructokinase type A (PFKA) family. ATP-dependent PFK group I subfamily. Prokaryotic clade 'B1' sub-subfamily. In terms of assembly, homotetramer. Requires Mg(2+) as cofactor.

Its subcellular location is the cytoplasm. It catalyses the reaction beta-D-fructose 6-phosphate + ATP = beta-D-fructose 1,6-bisphosphate + ADP + H(+). It functions in the pathway carbohydrate degradation; glycolysis; D-glyceraldehyde 3-phosphate and glycerone phosphate from D-glucose: step 3/4. With respect to regulation, allosterically activated by ADP and other diphosphonucleosides, and allosterically inhibited by phosphoenolpyruvate. Functionally, catalyzes the phosphorylation of D-fructose 6-phosphate to fructose 1,6-bisphosphate by ATP, the first committing step of glycolysis. In Sodalis glossinidius (strain morsitans), this protein is ATP-dependent 6-phosphofructokinase.